The sequence spans 178 residues: Tetratricopeptide repeat protein 9C (178 aa).

TPR repeat units lie at residues 15 to 48, 79 to 114, and 115 to 148; these read ASSF…LRSL, ADCY…QPEN, and VKAL…APKD.

It belongs to the TTC9 family.

The chain is Tetratricopeptide repeat protein 9C (ttc9c) from Xenopus tropicalis (Western clawed frog).